The sequence spans 1639 residues: MAKDSPSPLGASPKKPGCSSPAAAVLENQRRELEKLRAELEAERAGWRAERRRFAARERQLREEAERERRQLADRLRSKWEAQRSRELRQLQEEMQREREAEIRQLLRWKEAEQRQLQQLLHRERDGVVRQARELQRQLAEELVNRGHCSRPGASEVSAAQCRCRLQEVLAQLRWQTDGEQAARIRYLQAALEVERQLFLKYILAHFRGHPALSGSPDPQAVHSLEEPLPQTSSGSCHAPKPACQLGSLDSLSAEVGVRSRSLGLVSSACSSSPDGLLSTHASSLDCFAPACSRSLDSTRSLPKASKSEERPSSPDTSTPGSRRLSPPPSPLPPPPPPSAHRKLSNPRGGEGSESQPCEVLTPSPPGLGHHELIKLNWLLAKALWVLARRCYTLQAENKQLRRAGCPYQADEKVKRLKVKRAELTGLARRLADRARKLQETNLRAVSAPIPGESCAGLELCQVFARQRARDLSEQASAPLAKDKQIEELRQECHLLQARVASGPCSDLHTGRGGPCTQWLNVRDLDRLQRESQREVLRLQRQLMLQQGNGGAWPEAGGQSATCEEVRRQMLALERELDQRRRECQELGAQAAPARRRGEEAETQLQAALLKNAWLAEENGRLQAKTDWVRKVEAENSEVRGHLGRACQERDASGLIAEQLLQQAARGQDRQQQLQRDPQKALCDLHPSWKEIQALQCRPGHPPEQPWETSQMPESQVKGSRRPKFHARPEDYAVSQPNRDIQEKREASLEESPVALGESASVPQVSETVPASQPLSKKTSSQSNSSSEGSMWATVPSSPTLDRDTASEVDDLEPDSVSLALEMGGSAAPAAPKLKIFMAQYNYNPFEGPNDHPEGELPLTAGDYIYIFGDMDEDGFYEGELEDGRRGLVPSNFVEQIPDSYIPGCLPAKSPDLGPSQLPAGQDEALEEDSLLSGKAQGVVDRGLCQMVRVGSKTEVATEILDTKTEACQLGLLQSMGKQGLSRPLLGTKGVLRMAPMQLHLQNVTATSANITWVYSSHRHPHVVYLDDREHALTPAGVSCYTFQGLCPGTHYRARVEVRLPRDLLQVYWGTMSSTVTFDTLLAGPPYPPLDVLVERHASPGVLVVSWLPVTIDSAGSSNGVQVTGYAVYADGLKVCEVADATAGSTLLEFSQLQVPLTWQKVSVRTMSLCGESLDSVPAQIPEDFFMCHRWPETPPFSYTCGDPSTYRVTFPVCPQKLSLAPPSAKASPHNPGSCGEPQAKFLEAFFEEPPRRQSPVSNLGSEGECPSSGAGSQAQELAEAWEGCRKDLLFQKSPQNHRPPSVSDQPGEKENCSQHMGTSKSPAPGFIHLRTECGPRKEPCQEKAALERVLRQKQDAQGFTPPQLGASQQYASDFHNVLKEEQEALCLDLWGTERREERREPEPHSRQGQALGVKRGCQLHEPSSALCPAPSAKVIKMPRGGPQQLGTGANTPARVFVALSDYNPLVMSANLKAAEEELVFQKRQLLRVWGSQDTHDFYLSECNRQVGNIPGRLVAEMEVGTEQTDRRWRSPAQGNLPSVAHLEDFQGLTIPQGSSLVLQGNSKRLPLWTPKIMIAALDYDPGDGQMGGQGKGRLALRAGDVVMVYGPMDDQGFYYGELGGHRGLVPAHLLDHMSLHGH.

Disordered stretches follow at residues 1–22, 215–240, and 295–364; these read MAKD…SSPA, GSPD…CHAP, and SLDS…LTPS. The stretch at 21-143 forms a coiled coil; sequence PAAAVLENQR…ELQRQLAEEL (123 aa). Pro residues predominate over residues 326 to 339; it reads SPPPSPLPPPPPPS. Coiled-coil stretches lie at residues 409-442 and 480-619; these read QADE…QETN and LAKD…AEEN. Residues 697 to 811 form a disordered region; the sequence is CRPGHPPEQP…DRDTASEVDD (115 aa). 2 stretches are compositionally biased toward polar residues: residues 707 to 718 and 761 to 775; these read WETSQMPESQVK and SVPQ…SQPL. The segment covering 776–790 has biased composition (low complexity); the sequence is SKKTSSQSNSSSEGS. In terms of domain architecture, SH3 1 spans 832-899; the sequence is PKLKIFMAQY…PSNFVEQIPD (68 aa). Fibronectin type-III domains are found at residues 995-1083 and 1088-1184; these read APMQ…TLLA and PPLD…IPED. Disordered stretches follow at residues 1251-1273 and 1292-1330; these read PRRQ…GAGS and QKSP…FIHL. Over residues 1293–1305 the composition is skewed to polar residues; sequence KSPQNHRPPSVSD. 2 SH3 domains span residues 1452-1520 and 1569-1636; these read TPAR…EMEV and WTPK…HMSL.

The protein belongs to the RIMBP family. Interacts with LRGUK (via guanylate kinase-like domain). Interacts (via C-terminus) with HOOK1 (via coiled-coil region).

It is found in the cytoplasm. Its subcellular location is the cytoskeleton. Functionally, probable component of the manchette, a microtubule-based structure which plays a key role in sperm head morphogenesis during late stages of sperm development. This Homo sapiens (Human) protein is RIMS-binding protein 3A (RIMBP3).